The chain runs to 134 residues: MTEEPTKENLGGPKSPTPVTMEKSPKSEVVVTTVPLVSEVQLTAATGGAELSCYRCIIPFAVVVFITGIVVTAVAYSFNSHGSVISILGLVLLSSGLFLLASSALCWKVRQRNKKVKRRESQTALVVNQRSLFA.

The tract at residues 1–24 is disordered; that stretch reads MTEEPTKENLGGPKSPTPVTMEKS. Ser15 is modified (phosphoserine). Helical transmembrane passes span 56–76 and 84–104; these read CIIP…AVAY and VISI…ASSA. Ser121 is subject to Phosphoserine.

Interacts (via C-terminus) with TRPA1 and TRPV1. Interacts with TASOR.

The protein resides in the cell membrane. It localises to the membrane. The protein localises to the perikaryon. It is found in the cytoplasm. Its subcellular location is the perinuclear region. The protein resides in the endoplasmic reticulum. Its function is as follows. Plays a role during embryonic arterial endothelium differentiation and vascular morphogenesis through the ACVRL1 receptor-dependent signaling pathway upon stimulation by bone morphogenetic proteins, such as GDF2/BMP9 and BMP10. Involved in the regulation of nociception, acting as a modulator of the interaction between TRPA1 and TRPV1, two molecular sensors and mediators of pain signals in dorsal root ganglia (DRG) neurons. Mechanistically, it weakens their interaction, thereby releasing the inhibition of TRPA1 by TRPV1 and increasing the single-channel open probability of the TRPA1-TRPV1 complex. The protein is Transmembrane protein 100 (Tmem100) of Rattus norvegicus (Rat).